The chain runs to 544 residues: Methionine--tRNA ligase (544 aa).

A 'HIGH' region motif is present at residues 10-20; that stretch reads PYANGSLHLGH. Zn(2+) is bound by residues Cys141, Cys144, Cys153, and Cys156. A 'KMSKS' region motif is present at residues 329 to 333; it reads KLSTS. An ATP-binding site is contributed by Thr332.

It belongs to the class-I aminoacyl-tRNA synthetase family. MetG type 1 subfamily. As to quaternary structure, monomer. The cofactor is Zn(2+).

It is found in the cytoplasm. It carries out the reaction tRNA(Met) + L-methionine + ATP = L-methionyl-tRNA(Met) + AMP + diphosphate. In terms of biological role, is required not only for elongation of protein synthesis but also for the initiation of all mRNA translation through initiator tRNA(fMet) aminoacylation. This chain is Methionine--tRNA ligase, found in Bacillus mycoides (strain KBAB4) (Bacillus weihenstephanensis).